The chain runs to 103 residues: Large ribosomal subunit protein bL21 (103 aa).

This sequence belongs to the bacterial ribosomal protein bL21 family. Part of the 50S ribosomal subunit. Contacts protein L20.

Functionally, this protein binds to 23S rRNA in the presence of protein L20. The protein is Large ribosomal subunit protein bL21 of Hamiltonella defensa subsp. Acyrthosiphon pisum (strain 5AT).